The primary structure comprises 386 residues: N-terminal EF-hand calcium-binding protein 2 (386 aa).

R10 is modified (omega-N-methylarginine). Asymmetric dimethylarginine is present on R42. 2 EF-hand domains span residues 60–95 (GGTAVILDIFRRADKNDDGKLSLEEFQLFFADGVLN) and 96–129 (EKELEDLFHTIDSDNTNHVDTKELCDYFVDHMGD). Residues D73, N75, D77, K79, E84, D107, D109, T111, H113, and E118 each contribute to the Ca(2+) site. The stretch at 170 to 201 (LKETANQIQSLLSSVESAVEAIEEQTSQLRQN) forms a coiled coil. The ABM domain maps to 286–375 (QLVRQEMAVC…SQPEALSRIL (90 aa)).

Interacts (calcium-dependent) with ADORA2A and GRM5. In terms of tissue distribution, expressed in brain. Expressed in the spinal dorsal horn with especially strong expression in lamina IIi; found in excitory synaptic boutons and in ependymal cells (at protein level).

The protein resides in the cytoplasm. The protein localises to the cell projection. It is found in the dendrite. It localises to the axon. Its subcellular location is the cell membrane. May act as a signaling scaffold protein that senses intracellular calcium. Can modulate ligand-induced internalization of ADORA2A and coupling efficiency of mGluR5/GRM5; for both receptors may regulate signaling activity such as promoting MAPK1/3 (ERK1/2) activation. The sequence is that of N-terminal EF-hand calcium-binding protein 2 (NECAB2) from Homo sapiens (Human).